A 104-amino-acid polypeptide reads, in one-letter code: DNA-directed RNA polymerase subunit omega (104 aa).

The protein belongs to the RNA polymerase subunit omega family. As to quaternary structure, the RNAP catalytic core consists of 2 alpha, 1 beta, 1 beta' and 1 omega subunit. When a sigma factor is associated with the core the holoenzyme is formed, which can initiate transcription.

The catalysed reaction is RNA(n) + a ribonucleoside 5'-triphosphate = RNA(n+1) + diphosphate. Its function is as follows. Promotes RNA polymerase assembly. Latches the N- and C-terminal regions of the beta' subunit thereby facilitating its interaction with the beta and alpha subunits. This chain is DNA-directed RNA polymerase subunit omega (rpoZ), found in Streptococcus pyogenes serotype M1.